Consider the following 306-residue polypeptide: tRNA pseudouridine synthase B (306 aa).

The active-site Nucleophile is the Asp48.

Belongs to the pseudouridine synthase TruB family. Type 1 subfamily.

The catalysed reaction is uridine(55) in tRNA = pseudouridine(55) in tRNA. In terms of biological role, responsible for synthesis of pseudouridine from uracil-55 in the psi GC loop of transfer RNAs. The sequence is that of tRNA pseudouridine synthase B from Chromobacterium violaceum (strain ATCC 12472 / DSM 30191 / JCM 1249 / CCUG 213 / NBRC 12614 / NCIMB 9131 / NCTC 9757 / MK).